The sequence spans 82 residues: Exodeoxyribonuclease 7 small subunit (82 aa).

The protein belongs to the XseB family. As to quaternary structure, heterooligomer composed of large and small subunits.

It is found in the cytoplasm. It carries out the reaction Exonucleolytic cleavage in either 5'- to 3'- or 3'- to 5'-direction to yield nucleoside 5'-phosphates.. Its function is as follows. Bidirectionally degrades single-stranded DNA into large acid-insoluble oligonucleotides, which are then degraded further into small acid-soluble oligonucleotides. The protein is Exodeoxyribonuclease 7 small subunit of Mycobacterium marinum (strain ATCC BAA-535 / M).